A 118-amino-acid chain; its full sequence is Putative pterin-4-alpha-carbinolamine dehydratase (118 aa).

This sequence belongs to the pterin-4-alpha-carbinolamine dehydratase family.

It catalyses the reaction (4aS,6R)-4a-hydroxy-L-erythro-5,6,7,8-tetrahydrobiopterin = (6R)-L-erythro-6,7-dihydrobiopterin + H2O. In Pseudomonas fluorescens (strain ATCC BAA-477 / NRRL B-23932 / Pf-5), this protein is Putative pterin-4-alpha-carbinolamine dehydratase.